A 233-amino-acid chain; its full sequence is Putative N-acetylmannosamine-6-phosphate 2-epimerase (233 aa).

It belongs to the NanE family.

The enzyme catalyses an N-acyl-D-glucosamine 6-phosphate = an N-acyl-D-mannosamine 6-phosphate. It participates in amino-sugar metabolism; N-acetylneuraminate degradation; D-fructose 6-phosphate from N-acetylneuraminate: step 3/5. Its function is as follows. Converts N-acetylmannosamine-6-phosphate (ManNAc-6-P) to N-acetylglucosamine-6-phosphate (GlcNAc-6-P). The sequence is that of Putative N-acetylmannosamine-6-phosphate 2-epimerase from Yersinia pseudotuberculosis serotype O:3 (strain YPIII).